A 205-amino-acid polypeptide reads, in one-letter code: uncharacterized protein (205 aa).

3 consecutive transmembrane segments (helical) span residues 45 to 65 (LFFY…FLVI), 119 to 139 (VFWL…VTAF), and 144 to 164 (FEWM…LWGY).

The protein belongs to the TVP23 family.

Its subcellular location is the membrane. This is an uncharacterized protein from Caenorhabditis elegans.